A 377-amino-acid polypeptide reads, in one-letter code: Opsin-1 (377 aa).

The Extracellular portion of the chain corresponds to 1 to 58; the sequence is MDPGPGLAALQAWAAKSPAYGAANQTVVDKVPPDMMHMIDPHWYQFPPMNPLWHALLG. Asparagine 24 carries an N-linked (GlcNAc...) asparagine glycan. The helical transmembrane segment at 59–79 threads the bilayer; sequence FTIGVLGFVSISGNGMVIYIF. Topologically, residues 80–92 are cytoplasmic; it reads MSTKSLKTPSNLL. A helical transmembrane segment spans residues 93 to 113; the sequence is VVNLAFSDFLMMCAMSPAMVV. Residues 114 to 129 are Extracellular-facing; the sequence is NCYYETWVWGPFACEL. A disulfide bond links cysteine 127 and cysteine 204. The helical transmembrane segment at 130–150 threads the bilayer; sequence YACAGSLFGCASIWTMTMIAF. Residues 151-169 lie on the Cytoplasmic side of the membrane; that stretch reads DRYNVIVKGIAAKPMTSNG. The helical transmembrane segment at 170–190 threads the bilayer; it reads ALLRILGIWVFSLAWTLLPFF. Over 191–220 the chain is Extracellular; sequence GWNRYVPEGNMTACGTDYLSKSWVSRSYIL. The N-linked (GlcNAc...) asparagine glycan is linked to asparagine 200. A helical membrane pass occupies residues 221–241; the sequence is IYSVFVYFLPLLLIIYSYFFI. Over 242–280 the chain is Cytoplasmic; it reads VQAVAAHEKAMREQAKKMNVASLRSSEAANTSAECKLAK. A helical transmembrane segment spans residues 281–301; it reads VALMTISLWFMAWTPYLVINY. The Extracellular portion of the chain corresponds to 302 to 312; the sequence is TGVFESAPISP. A helical transmembrane segment spans residues 313–335; sequence LATIWGSLFAKANAVYNPIVYGI. The Cytoplasmic portion of the chain corresponds to 336 to 377; it reads SHPKYQAALYAKFPSLQCQSAPEDAGSVASGTTAVSEEKPAA. The interval 357 to 377 is disordered; the sequence is PEDAGSVASGTTAVSEEKPAA.

This sequence belongs to the G-protein coupled receptor 1 family. Opsin subfamily. As to expression, in the retina, expression is abundant and uniform in the anterior-posterior and oblique cells of the retinulae, with some expression in the proximal cells. There is no expression in the dorsal rim retinulae (at protein level).

It localises to the cell projection. It is found in the rhabdomere membrane. Visual pigments are the light-absorbing molecules that mediate vision. They consist of an apoprotein, opsin, covalently linked to cis-retinal. May play a role in photoperiodic photoreception. This Manduca sexta (Tobacco hawkmoth) protein is Opsin-1 (OP1).